Consider the following 542-residue polypeptide: Membrane protein insertase YidC (542 aa).

The chain crosses the membrane as a helical span at residues 5–25 (TLLAVILSITVFYVFSLLFAP). The segment at 33 to 64 (ESTGQAVSAPVSAGQPVAGGVQPSASAPSLPA) is disordered. The span at 54–64 (QPSASAPSLPA) shows a compositional bias: low complexity. A run of 5 helical transmembrane segments spans residues 323–343 (LDLG…KYFY), 345–365 (YVGN…ALFF), 419–439 (LPML…MFSI), 463–483 (MLGL…TMFI), and 500–520 (MLAL…GLVL).

This sequence belongs to the OXA1/ALB3/YidC family. Type 1 subfamily. In terms of assembly, interacts with the Sec translocase complex via SecD. Specifically interacts with transmembrane segments of nascent integral membrane proteins during membrane integration.

It localises to the cell inner membrane. Its function is as follows. Required for the insertion and/or proper folding and/or complex formation of integral membrane proteins into the membrane. Involved in integration of membrane proteins that insert both dependently and independently of the Sec translocase complex, as well as at least some lipoproteins. Aids folding of multispanning membrane proteins. This Pelobacter propionicus (strain DSM 2379 / NBRC 103807 / OttBd1) protein is Membrane protein insertase YidC.